A 346-amino-acid chain; its full sequence is MIESDRIITASPFSSQEEVIERALRPVQLDDYVGQEKIREQLKIFIEAARQRQEALDHVLLFGPPGLGKTTLAHIIAREMGVNLRHTSGPVLERAGDLAALLTNLEANDVLFIDEIHRLSPVVEEILYPAMEDYQLDIMIGEGVAARSVKIDLPSFTLVGATTRAGMLTNPLRDRFGIVSRLEFYTSDELSKIVTRSAGLLDVDITADGAREIACRSRGTPRIANRLLRRVRDFAEVRANGRIDRQVADAALQMLDVDAAGLDVLDRKLLLAVLEKFGGGPVGVDNLAAAINEERDTIEEVLEPYLIQQGFLQRTPRGRMATTMTYQHFDIIPLQQAATPGLFNPD.

Residues Ser4–Tyr185 are large ATPase domain (RuvB-L). ATP is bound by residues Leu24, Arg25, Gly66, Lys69, Thr70, Thr71, Glu132–Tyr134, Arg175, Tyr185, and Arg222. Position 70 (Thr70) interacts with Mg(2+). Positions Thr186–Asp256 are small ATPAse domain (RuvB-S). The segment at Ala259–Asp346 is head domain (RuvB-H). The DNA site is built by Arg295, Arg314, and Arg319.

It belongs to the RuvB family. As to quaternary structure, homohexamer. Forms an RuvA(8)-RuvB(12)-Holliday junction (HJ) complex. HJ DNA is sandwiched between 2 RuvA tetramers; dsDNA enters through RuvA and exits via RuvB. An RuvB hexamer assembles on each DNA strand where it exits the tetramer. Each RuvB hexamer is contacted by two RuvA subunits (via domain III) on 2 adjacent RuvB subunits; this complex drives branch migration. In the full resolvosome a probable DNA-RuvA(4)-RuvB(12)-RuvC(2) complex forms which resolves the HJ.

The protein localises to the cytoplasm. The enzyme catalyses ATP + H2O = ADP + phosphate + H(+). Its function is as follows. The RuvA-RuvB-RuvC complex processes Holliday junction (HJ) DNA during genetic recombination and DNA repair, while the RuvA-RuvB complex plays an important role in the rescue of blocked DNA replication forks via replication fork reversal (RFR). RuvA specifically binds to HJ cruciform DNA, conferring on it an open structure. The RuvB hexamer acts as an ATP-dependent pump, pulling dsDNA into and through the RuvAB complex. RuvB forms 2 homohexamers on either side of HJ DNA bound by 1 or 2 RuvA tetramers; 4 subunits per hexamer contact DNA at a time. Coordinated motions by a converter formed by DNA-disengaged RuvB subunits stimulates ATP hydrolysis and nucleotide exchange. Immobilization of the converter enables RuvB to convert the ATP-contained energy into a lever motion, pulling 2 nucleotides of DNA out of the RuvA tetramer per ATP hydrolyzed, thus driving DNA branch migration. The RuvB motors rotate together with the DNA substrate, which together with the progressing nucleotide cycle form the mechanistic basis for DNA recombination by continuous HJ branch migration. Branch migration allows RuvC to scan DNA until it finds its consensus sequence, where it cleaves and resolves cruciform DNA. This chain is Holliday junction branch migration complex subunit RuvB, found in Nitrosomonas eutropha (strain DSM 101675 / C91 / Nm57).